The sequence spans 350 residues: UBX domain-containing protein 2B (350 aa).

Residues 1 to 29 (MEERENSEEGDDGAGEEEEEDQGSGEDGG) show a composition bias toward acidic residues. Residues 1-46 (MEERENSEEGDDGAGEEEEEDQGSGEDGGEVGAEREQEAELKDSLR) form a disordered region. Residues 32-45 (GAEREQEAELKDSL) are compositionally biased toward basic and acidic residues. In terms of domain architecture, SEP spans 160–225 (EIQILLKLWS…MEDHQDQEYI (66 aa)). The region spanning 271-348 (EHVPTTKIQI…DILNTVILQR (78 aa)) is the UBX domain.

The protein belongs to the NSFL1C family.

It is found in the nucleus. It localises to the cytoplasm. Its subcellular location is the cytosol. The protein localises to the endoplasmic reticulum. The protein resides in the golgi apparatus. It is found in the cytoskeleton. It localises to the microtubule organizing center. Its subcellular location is the centrosome. Its function is as follows. Adapter protein required for Golgi and endoplasmic reticulum biogenesis. Involved in Golgi and endoplasmic reticulum maintenance during interphase and in their reassembly at the end of mitosis. Regulates the centrosomal levels of kinase aurka-a/Aurora A during mitotic progression by promoting aurka-a removal from centrosomes in prophase. Also, regulates spindle orientation during mitosis. The chain is UBX domain-containing protein 2B (ubxn2b) from Xenopus laevis (African clawed frog).